Here is a 2230-residue protein sequence, read N- to C-terminus: DNA polymerase epsilon catalytic subunit A (2230 aa).

Over residues 1–19 the composition is skewed to polar residues; it reads MPTRQPSKYGNKFRSSSAS. The interval 1–24 is disordered; sequence MPTRQPSKYGNKFRSSSASFKPKR. Residues Cys2101, Cys2104, Cys2136, and Cys2139 each contribute to the Zn(2+) site. The CysA-type zinc finger occupies 2101–2139; sequence CNACCLIRDLDLCRDEDVLPEMGSDPNKAAPKPWRCPFC. The [4Fe-4S] cluster site is built by Cys2170, Cys2173, Cys2185, and Cys2187. A CysB motif motif is present at residues 2170-2187; it reads CSKCGGLKISDFMEHCSC.

Belongs to the DNA polymerase type-B family. As to quaternary structure, heterotetramer. Consists of 4 subunits: pol2, dpb2, dpb3 and dpb4. [4Fe-4S] cluster serves as cofactor.

It is found in the nucleus. The enzyme catalyses DNA(n) + a 2'-deoxyribonucleoside 5'-triphosphate = DNA(n+1) + diphosphate. In terms of biological role, DNA polymerase II participates in chromosomal DNA replication. The polypeptide is DNA polymerase epsilon catalytic subunit A (pol2) (Aspergillus fumigatus (strain ATCC MYA-4609 / CBS 101355 / FGSC A1100 / Af293) (Neosartorya fumigata)).